The chain runs to 654 residues: MAKSEKHKLAQTLIDSINEIASISDSVTPMKKHCANLSRRLSLLLPMLEEIRDNQESSSEVVNALLSVKQSLLHAKDLLSFVSHVSKIYLVLERDQVMVKFQKVTSLLEQALSIIPYENLEISDELKEQVELVLVQLRRSLGKRGGDVYDDELYKDVLSLYSGRGSVMESDMVRRVAEKLQLMTITDLTQESLALLDMVSSSGGDDPGESFEKMSMVLKKIKDFVQTYNPNLDDAPLRLKSSLPKSRDDDRDMLIPPEEFRCPISLELMTDPVIVSSGQTYERECIKKWLEGGHLTCPKTQETLTSDIMTPNYVLRSLIAQWCESNGIEPPKRPNISQPSSKASSSSSAPDDEHNKIEELLLKLTSQQPEDRRSAAGEIRLLAKQNNHNRVAIAASGAIPLLVNLLTISNDSRTQEHAVTSILNLSICQENKGKIVYSSGAVPGIVHVLQKGSMEARENAAATLFSLSVIDENKVTIGAAGAIPPLVTLLSEGSQRGKKDAATALFNLCIFQGNKGKAVRAGLVPVLMRLLTEPESGMVDESLSILAILSSHPDGKSEVGAADAVPVLVDFIRSGSPRNKENSAAVLVHLCSWNQQHLIEAQKLGIMDLLIEMAENGTDRGKRKAAQLLNRFSRFNDQQKQHSGLGLEDQISLI.

Positions 255–329 (IPPEEFRCPI…AQWCESNGIE (75 aa)) constitute a U-box domain. Residues 329–352 (EPPKRPNISQPSSKASSSSSAPDD) form a disordered region. Residues 337-349 (SQPSSKASSSSSA) show a composition bias toward low complexity. ARM repeat units lie at residues 387–427 (NHNR…NLSI), 430–469 (ENKGKIVYSSGAVPGIVHVLQKGSMEARENAAATLFSLSV), 471–510 (DENKVTIGAAGAIPPLVTLLSEGSQRGKKDAATALFNLCI), 512–551 (QGNKGKAVRAGLVPVLMRLLTEPESGMVDESLSILAILSS), and 553–592 (PDGKSEVGAADAVPVLVDFIRSGSPRNKENSAAVLVHLCS).

The enzyme catalyses S-ubiquitinyl-[E2 ubiquitin-conjugating enzyme]-L-cysteine + [acceptor protein]-L-lysine = [E2 ubiquitin-conjugating enzyme]-L-cysteine + N(6)-ubiquitinyl-[acceptor protein]-L-lysine.. It functions in the pathway protein modification; protein ubiquitination. In terms of biological role, functions as an E3 ubiquitin ligase. The sequence is that of U-box domain-containing protein 12 (PUB12) from Arabidopsis thaliana (Mouse-ear cress).